Here is a 295-residue protein sequence, read N- to C-terminus: UDP-N-acetylenolpyruvoylglucosamine reductase (295 aa).

The FAD-binding PCMH-type domain occupies 26–189; sequence VGGRADVLFK…VEAEFKGVNS (164 aa). Residue Arg-169 is part of the active site. Cys-218 (proton donor) is an active-site residue. Glu-288 is an active-site residue.

The protein belongs to the MurB family. The cofactor is FAD.

It localises to the cytoplasm. The catalysed reaction is UDP-N-acetyl-alpha-D-muramate + NADP(+) = UDP-N-acetyl-3-O-(1-carboxyvinyl)-alpha-D-glucosamine + NADPH + H(+). It participates in cell wall biogenesis; peptidoglycan biosynthesis. In terms of biological role, cell wall formation. The sequence is that of UDP-N-acetylenolpyruvoylglucosamine reductase from Wolbachia pipientis wMel.